Consider the following 65-residue polypeptide: Large ribosomal subunit protein bL35 (65 aa).

The protein belongs to the bacterial ribosomal protein bL35 family.

This chain is Large ribosomal subunit protein bL35, found in Neisseria meningitidis serogroup A / serotype 4A (strain DSM 15465 / Z2491).